A 381-amino-acid chain; its full sequence is Metacaspase-8 (381 aa).

Catalysis depends on residues histidine 86 and cysteine 140. An S-nitrosocysteine modification is found at cysteine 140.

It belongs to the peptidase C14B family. Proteolytically processed; by an autocatalytic mechanism.

In terms of biological role, cysteine protease that cleaves specifically after arginine residues. Does not cleave caspase-specific substrates. May be involved in the modulation of programmed cell death activated by oxidative stress. The protein is Metacaspase-8 (AMC8) of Arabidopsis thaliana (Mouse-ear cress).